Consider the following 494-residue polypeptide: Arp2/3 complex-activating protein rickA (494 aa).

Positions 312 to 494 (PLENNIPPPP…RNSQKPSFVR (183 aa)) are disordered. Residues 317 to 357 (IPPPPPPPPPLPDNNIPPPPPPPPPLPDNNIPPPPPPPPMA) show a composition bias toward pro residues. The WH2 domain occupies 383 to 400 (DTSDLMREIAGPKKLKKV). The tract at residues 421-454 (VNKPSGLESIFARRVAIEMSDSSSSESDSGNWSD) is central and acidic domains. Residues 440–456 (SDSSSSESDSGNWSDVS) show a composition bias toward low complexity. Polar residues predominate over residues 477–494 (THAQKINNRNSQKPSFVR).

It is found in the cell surface. Functionally, recruits and activates the Arp2/3 complex, which in turn leads to actin polymerization, promoting Rickettsia motility during infection. The sequence is that of Arp2/3 complex-activating protein rickA (rickA) from Rickettsia rickettsii.